Here is a 90-residue protein sequence, read N- to C-terminus: UPF0335 protein Smed_2680 (90 aa).

It belongs to the UPF0335 family.

The protein is UPF0335 protein Smed_2680 of Sinorhizobium medicae (strain WSM419) (Ensifer medicae).